A 233-amino-acid polypeptide reads, in one-letter code: Ycf53-like protein (233 aa).

The protein belongs to the ycf53 family.

In Synechocystis sp. (strain ATCC 27184 / PCC 6803 / Kazusa), this protein is Ycf53-like protein.